The primary structure comprises 131 residues: Small ribosomal subunit protein uS12 (131 aa).

A disordered region spans residues 1-32 (MPTFSQLVRKGRTAPRYKTASPALQGSPQRRG). Asp-89 is subject to 3-methylthioaspartic acid. The segment at 110–131 (RKQGRSKYGAKRAKGGAAAGKK) is disordered. Residues 111–131 (KQGRSKYGAKRAKGGAAAGKK) show a composition bias toward basic residues.

The protein belongs to the universal ribosomal protein uS12 family. In terms of assembly, part of the 30S ribosomal subunit. Contacts proteins S8 and S17. May interact with IF1 in the 30S initiation complex.

Functionally, with S4 and S5 plays an important role in translational accuracy. Interacts with and stabilizes bases of the 16S rRNA that are involved in tRNA selection in the A site and with the mRNA backbone. Located at the interface of the 30S and 50S subunits, it traverses the body of the 30S subunit contacting proteins on the other side and probably holding the rRNA structure together. The combined cluster of proteins S8, S12 and S17 appears to hold together the shoulder and platform of the 30S subunit. This is Small ribosomal subunit protein uS12 from Acidobacterium capsulatum (strain ATCC 51196 / DSM 11244 / BCRC 80197 / JCM 7670 / NBRC 15755 / NCIMB 13165 / 161).